We begin with the raw amino-acid sequence, 299 residues long: uncharacterized protein (299 aa).

The disordered stretch occupies residues 1 to 38 (MSLDSNSDTEFELVPKFQTQPTRGDAPKSPELEEVSTV).

The protein belongs to the calycin superfamily. Fatty-acid binding protein (FABP) family.

This is an uncharacterized protein from Caenorhabditis elegans.